A 726-amino-acid chain; its full sequence is uncharacterized protein (726 aa).

Active-site charge relay system residues include S583 and H698.

Belongs to the peptidase S9B family.

This is an uncharacterized protein from Sinorhizobium fredii (strain NBRC 101917 / NGR234).